Here is a 156-residue protein sequence, read N- to C-terminus: Small ribosomal subunit protein uS7 (156 aa).

This sequence belongs to the universal ribosomal protein uS7 family. In terms of assembly, part of the 30S ribosomal subunit. Contacts proteins S9 and S11.

Functionally, one of the primary rRNA binding proteins, it binds directly to 16S rRNA where it nucleates assembly of the head domain of the 30S subunit. Is located at the subunit interface close to the decoding center, probably blocks exit of the E-site tRNA. The sequence is that of Small ribosomal subunit protein uS7 from Mesorhizobium japonicum (strain LMG 29417 / CECT 9101 / MAFF 303099) (Mesorhizobium loti (strain MAFF 303099)).